Consider the following 1160-residue polypeptide: DNA polymerase III subunit alpha (1160 aa).

It is found in the cytoplasm. The enzyme catalyses DNA(n) + a 2'-deoxyribonucleoside 5'-triphosphate = DNA(n+1) + diphosphate. Functionally, DNA polymerase III is a complex, multichain enzyme responsible for most of the replicative synthesis in bacteria. This DNA polymerase also exhibits 3' to 5' exonuclease activity. The alpha chain is the DNA polymerase. This chain is DNA polymerase III subunit alpha (dnaE), found in Escherichia coli O6:H1 (strain CFT073 / ATCC 700928 / UPEC).